The following is a 405-amino-acid chain: Tryptophan synthase beta chain (405 aa).

Lys-98 is modified (N6-(pyridoxal phosphate)lysine).

Belongs to the TrpB family. Tetramer of two alpha and two beta chains. It depends on pyridoxal 5'-phosphate as a cofactor.

It catalyses the reaction (1S,2R)-1-C-(indol-3-yl)glycerol 3-phosphate + L-serine = D-glyceraldehyde 3-phosphate + L-tryptophan + H2O. It functions in the pathway amino-acid biosynthesis; L-tryptophan biosynthesis; L-tryptophan from chorismate: step 5/5. In terms of biological role, the beta subunit is responsible for the synthesis of L-tryptophan from indole and L-serine. In Afipia carboxidovorans (strain ATCC 49405 / DSM 1227 / KCTC 32145 / OM5) (Oligotropha carboxidovorans), this protein is Tryptophan synthase beta chain.